The chain runs to 249 residues: Triosephosphate isomerase (249 aa).

9 to 11 (NWK) provides a ligand contact to substrate. His-94 (electrophile) is an active-site residue. Glu-166 (proton acceptor) is an active-site residue. Substrate-binding positions include Gly-172, Ser-211, and 232–233 (GG).

The protein belongs to the triosephosphate isomerase family. As to quaternary structure, homodimer.

It is found in the cytoplasm. The catalysed reaction is D-glyceraldehyde 3-phosphate = dihydroxyacetone phosphate. Its pathway is carbohydrate biosynthesis; gluconeogenesis. The protein operates within carbohydrate degradation; glycolysis; D-glyceraldehyde 3-phosphate from glycerone phosphate: step 1/1. Functionally, involved in the gluconeogenesis. Catalyzes stereospecifically the conversion of dihydroxyacetone phosphate (DHAP) to D-glyceraldehyde-3-phosphate (G3P). This is Triosephosphate isomerase from Moorella thermoacetica (strain ATCC 39073 / JCM 9320).